We begin with the raw amino-acid sequence, 362 residues long: MAMSAIGFEGYEKRLEVTFFEPGLFLDTQGKGLRALAKSQIDEILQPAECTIVSSLSNDQLDSYVLSESSLFIFPYKIVIKTCGTTKLLLSIEPLLRLAGELSLDVKAVRYTRGSFLCPGGQPFPHRNFSEEVSVLDGHFAKLGLSSVAYLMGNDDETKKWHVYSASSANSNNKNNVYTLEMCMTGLDKDKASVFYKNESSSAGSMTDNSGIRKILPQSQICDFEFEPCGYSMNSIEGDAISTIHVTPEDGFSYASFEAVGYDFTTMDLSHLVSKVLTCFKPKQFSVAVHSTVAQKSYDSGLSVDLDDYGCKESTMESLGEERGTVMYQRFEKLGRYCGSPRSTLKCEWSSNSSCNSEDEKE.

Active-site residues include Glu-9 and Glu-12. Glu-68 serves as a coordination point for substrate. Residue Ser-69 is the Schiff-base intermediate with substrate; via pyruvic acid of the active site. Ser-69 carries the post-translational modification Pyruvic acid (Ser); by autocatalysis. Cys-83 (proton donor; for catalytic activity) is an active-site residue. Active-site proton acceptor; for processing activity residues include Ser-232 and His-245. Position 249 (Glu-249) interacts with substrate.

It belongs to the eukaryotic AdoMetDC family. The cofactor is pyruvate. Post-translationally, is synthesized initially as an inactive proenzyme. Formation of the active enzyme involves a self-maturation process in which the active site pyruvoyl group is generated from an internal serine residue via an autocatalytic post-translational modification. Two non-identical subunits are generated from the proenzyme in this reaction, and the pyruvate is formed at the N-terminus of the alpha chain, which is derived from the carboxyl end of the proenzyme. The post-translation cleavage follows an unusual pathway, termed non-hydrolytic serinolysis, in which the side chain hydroxyl group of the serine supplies its oxygen atom to form the C-terminus of the beta chain, while the remainder of the serine residue undergoes an oxidative deamination to produce ammonia and the pyruvoyl group blocking the N-terminus of the alpha chain.

The enzyme catalyses S-adenosyl-L-methionine + H(+) = S-adenosyl 3-(methylsulfanyl)propylamine + CO2. It participates in amine and polyamine biosynthesis; S-adenosylmethioninamine biosynthesis; S-adenosylmethioninamine from S-adenosyl-L-methionine: step 1/1. Essential for biosynthesis of the polyamines spermidine and spermine. Essential for polyamine homeostasis, and normal plant embryogenesis, growth and development. The sequence is that of S-adenosylmethionine decarboxylase proenzyme 2 from Arabidopsis thaliana (Mouse-ear cress).